The primary structure comprises 225 residues: UPF0758 protein Sputw3181_0338 (225 aa).

One can recognise an MPN domain in the interval 102 to 224 (VLTNPDLTRD…IVSFAERGWI (123 aa)). His-173, His-175, and Asp-186 together coordinate Zn(2+). A JAMM motif motif is present at residues 173 to 186 (HNHPSGIAEPSQAD).

It belongs to the UPF0758 family.

In Shewanella sp. (strain W3-18-1), this protein is UPF0758 protein Sputw3181_0338.